Consider the following 554-residue polypeptide: Myo-inositol transporter 1 (554 aa).

The span at 1–13 shows a compositional bias: polar residues; sequence MGSSTNNTQSKAT. Residues 1–57 form a disordered region; sequence MGSSTNNTQSKATPSVLENEVNSSKSSVVSSTSSAKGLLRETTNHGTMETSSVQISE. N-linked (GlcNAc...) asparagine glycans are attached at residues Asn-6 and Asn-22. Low complexity predominate over residues 15-34; sequence SVLENEVNSSKSSVVSSTSS. The span at 44-57 shows a compositional bias: polar residues; that stretch reads NHGTMETSSVQISE. A run of 6 helical transmembrane segments spans residues 65–85, 110–130, 144–164, 167–187, 196–216, and 227–247; these read MVLVLTLASSISGFMFGYDTG, FITSATSLGALLGAVVGGVLA, IIFVVGTIIQLAARTVWTMIA, FVLGWGVGIASLIAPLMISEL, LIVTNVIFITGGQLIAYFINW, and VSVGLCMVPPVLQFVLFWFLP. The N-linked (GlcNAc...) asparagine glycan is linked to Asn-279. The helical transmembrane segment at 313 to 332 threads the bilayer; sequence GNFRALILACGLQGIQQFTG. Asn-351 is a glycosylation site (N-linked (GlcNAc...) asparagine). 5 consecutive transmembrane segments (helical) span residues 354–374, 382–402, 420–440, 459–479, and 490–510; these read AVSIIIAATNFVFTGIAICII, ILLVGMPCMCISLIVCAVAFH, GWGIVVIIGMILYVASYAIGI, IGAMYAACTNWAGSLVIASTF, and GTFSFFAGLCFIAFFFVYFLL.

This sequence belongs to the major facilitator superfamily. Sugar transporter (TC 2.A.1.1) family.

It is found in the cell membrane. The catalysed reaction is myo-inositol(out) + H(+)(out) = myo-inositol(in) + H(+)(in). Major transporter for myo-inositol. This chain is Myo-inositol transporter 1, found in Candida albicans (strain SC5314 / ATCC MYA-2876) (Yeast).